The chain runs to 175 residues: Cytochrome c homolog (175 aa).

Residues 1-8 (MSGKELNK) lie on the Cytoplasmic side of the membrane. The helical; Signal-anchor transmembrane segment at 9 to 29 (IVAAILFASLIAMMVGFVANI) threads the bilayer. Over 30–175 (LYKPTLELQH…LFLKTYVHDK (146 aa)) the chain is Periplasmic. Cysteine 84, cysteine 87, histidine 88, and methionine 150 together coordinate heme c.

The protein belongs to the cytochrome c family. Post-translationally, binds 1 heme c group covalently per subunit.

It is found in the cell membrane. Functionally, may be involved in electron transfer from bc1 complex to aa3. The sequence is that of Cytochrome c homolog (cycM) from Rickettsia conorii (strain ATCC VR-613 / Malish 7).